The chain runs to 119 residues: Basic phospholipase A2 notexin (119 aa).

7 cysteine pairs are disulfide-bonded: Cys-11–Cys-71, Cys-27–Cys-118, Cys-29–Cys-45, Cys-44–Cys-99, Cys-51–Cys-92, Cys-60–Cys-85, and Cys-78–Cys-90. Positions 28, 30, and 32 each coordinate Ca(2+). Residue His-48 is part of the active site. Asp-49 is a binding site for Ca(2+). The active site involves Asp-93.

It belongs to the phospholipase A2 family. Group I subfamily. D49 sub-subfamily. Monomer. Ca(2+) is required as a cofactor. Expressed by the venom gland.

The protein localises to the secreted. The catalysed reaction is a 1,2-diacyl-sn-glycero-3-phosphocholine + H2O = a 1-acyl-sn-glycero-3-phosphocholine + a fatty acid + H(+). Functionally, snake venom phospholipase A2 (PLA2) that inhibits neuromuscular transmission by blocking acetylcholine release from the nerve termini. Is directly toxic to skeletal muscle upon local application in vivo (dystrophic effect). Also has direct nephrotoxicity in experimental mice; a single subcutaneous dose (1.38 ug/kg) produces renal tubular and glomerular damage within 24 hours. PLA2 catalyzes the calcium-dependent hydrolysis of the 2-acyl groups in 3-sn-phosphoglycerides. In Notechis scutatus scutatus (Mainland tiger snake), this protein is Basic phospholipase A2 notexin.